The sequence spans 351 residues: Biotin synthase (351 aa).

Residues 73–298 (PEVEVEGIIS…RTILRYSGGR (226 aa)) form the Radical SAM core domain. Cysteine 88, cysteine 92, and cysteine 95 together coordinate [4Fe-4S] cluster. Residues cysteine 131, cysteine 164, cysteine 223, and arginine 293 each coordinate [2Fe-2S] cluster.

It belongs to the radical SAM superfamily. Biotin synthase family. In terms of assembly, homodimer. It depends on [4Fe-4S] cluster as a cofactor. The cofactor is [2Fe-2S] cluster.

The enzyme catalyses (4R,5S)-dethiobiotin + (sulfur carrier)-SH + 2 reduced [2Fe-2S]-[ferredoxin] + 2 S-adenosyl-L-methionine = (sulfur carrier)-H + biotin + 2 5'-deoxyadenosine + 2 L-methionine + 2 oxidized [2Fe-2S]-[ferredoxin]. It functions in the pathway cofactor biosynthesis; biotin biosynthesis; biotin from 7,8-diaminononanoate: step 2/2. Functionally, catalyzes the conversion of dethiobiotin (DTB) to biotin by the insertion of a sulfur atom into dethiobiotin via a radical-based mechanism. The protein is Biotin synthase of Frankia alni (strain DSM 45986 / CECT 9034 / ACN14a).